The primary structure comprises 247 residues: Mannose-specific lectin CML-2 (247 aa).

The a carbohydrate site is built by D87 and G107. The N-linked (GlcNAc...) asparagine glycan is linked to N119. Mn(2+) is bound by residues E129 and D131. Residues D131 and F133 each coordinate Ca(2+). The a carbohydrate site is built by S138 and N139. Ca(2+)-binding residues include N139 and D142. Residues D142 and H147 each contribute to the Mn(2+) site. Residues G221, E222, and Q223 each coordinate a carbohydrate.

It belongs to the leguminous lectin family. In terms of assembly, homodimer; non-covalently linked. In terms of processing, glycosylated.

Its function is as follows. Mannose-specific lectin. Also binds alpha-methyl-D-mannoside, D-glucose, N-acetyl-D-glucosamine and sucrose but not D-galactose, D-arabinose, D-fructose, D-xylose, lactose or glycoproteins fetiun, PSM and ovalbumin. Shows agglutinating activity towards rabbit erythrocytes. In Centrolobium microchaete (Canarywood tree), this protein is Mannose-specific lectin CML-2.